The following is a 463-amino-acid chain: Tryprostatin B synthase (463 aa).

Residues Met93 and Glu101 each contribute to the brevianamide F site. Dimethylallyl diphosphate is bound by residues Arg112, Lys200, and Tyr202. Tyr204 provides a ligand contact to brevianamide F. Dimethylallyl diphosphate is bound by residues Lys293, Tyr295, Gln379, Tyr381, Tyr445, and Tyr449.

It belongs to the tryptophan dimethylallyltransferase family.

The enzyme catalyses brevianamide F + dimethylallyl diphosphate = tryprostatin B + diphosphate. Its pathway is mycotoxin biosynthesis. Its function is as follows. Brevianamide F prenyltransferase; part of the gene cluster that mediates the biosynthesis of fumitremorgins, indole alkaloids that carry not only intriguing chemical structures, but also interesting biological and pharmacological activities. The biosynthesis of fumitremorgin-type alkaloids begins by condensation of the two amino acids L-tryptophan and L-proline to brevianamide F, catalyzed by the non-ribosomal peptide synthetase ftmPS/ftmA. Brevianamide F is then prenylated by the prenyltransferase ftmPT1/ftmB in the presence of dimethylallyl diphosphate, resulting in the formation of tryprostatin B. The three cytochrome P450 monooxygenases, ftmP450-1/ftmC, ftmP450-2/ftmE and ftmP450-3/FtmG, are responsible for the conversion of tryprostatin B to 6-hydroxytryprostatin B, tryprostatin A to fumitremorgin C and fumitremorgin C to 12,13-dihydroxyfumitremorgin C, respectively. The putative methyltransferase ftmMT/ftmD is expected for the conversion of 6-hydroxytryprostatin B to tryprostatin A. FtmPT2/FtmH catalyzes the prenylation of 12,13-dihydroxyfumitre-morgin C in the presence of dimethylallyl diphosphate, resulting in the formation of fumitremorgin B. Fumitremorgin B is further converted to verruculogen by ftmOx1/ftmF via the insertion of an endoperoxide bond between the two prenyl moieties. Finally, verruculogen is further converted to fumitremorgin A by the verruculogen prenyltransferase ftmPT3. This Neosartorya fischeri (strain ATCC 1020 / DSM 3700 / CBS 544.65 / FGSC A1164 / JCM 1740 / NRRL 181 / WB 181) (Aspergillus fischerianus) protein is Tryprostatin B synthase.